A 74-amino-acid chain; its full sequence is UPF0154 protein LVIS_1358 (74 aa).

The chain crosses the membrane as a helical span at residues 4–24; the sequence is WIWILIVIVVGLACAAGGFYG.

Belongs to the UPF0154 family.

The protein localises to the cell membrane. This Levilactobacillus brevis (strain ATCC 367 / BCRC 12310 / CIP 105137 / JCM 1170 / LMG 11437 / NCIMB 947 / NCTC 947) (Lactobacillus brevis) protein is UPF0154 protein LVIS_1358.